Consider the following 413-residue polypeptide: Probable protein phosphatase 2C 78 (413 aa).

A disordered region spans residues lysine 21–arginine 40. A PPM-type phosphatase domain is found at lysine 111–leucine 409. Mn(2+) is bound by residues aspartate 153, glycine 154, aspartate 327, and aspartate 400.

The protein belongs to the PP2C family. Requires Mg(2+) as cofactor. Mn(2+) is required as a cofactor.

It is found in the golgi apparatus. The protein resides in the nucleus. It carries out the reaction O-phospho-L-seryl-[protein] + H2O = L-seryl-[protein] + phosphate. The enzyme catalyses O-phospho-L-threonyl-[protein] + H2O = L-threonyl-[protein] + phosphate. Its function is as follows. Acts as a negative regulator of abscisic acid (ABA) signaling for stomatal closure in leaves, and controls water loss during leaf senescence. Activated by the NAC029/NAP transcription factor during ABA signaling in senescing leaves. Functions as a negative regulator of osmotic stress and ABA signaling. Acts as a negative regulator of response to drought. This Arabidopsis thaliana (Mouse-ear cress) protein is Probable protein phosphatase 2C 78.